We begin with the raw amino-acid sequence, 97 residues long: Large ribosomal subunit protein bL28 (97 aa).

It belongs to the bacterial ribosomal protein bL28 family.

This is Large ribosomal subunit protein bL28 from Rickettsia africae (strain ESF-5).